Consider the following 628-residue polypeptide: FAD-linked oxidoreductase hmp9 (628 aa).

Residues Met1–Ala29 form the signal peptide. Positions Gly34–Asp53 are disordered. 2 N-linked (GlcNAc...) asparagine glycosylation sites follow: Asn80 and Asn133. The 186-residue stretch at Leu152–Asn337 folds into the FAD-binding PCMH-type domain. Asn356 carries an N-linked (GlcNAc...) asparagine glycan.

Belongs to the oxygen-dependent FAD-linked oxidoreductase family.

It functions in the pathway secondary metabolite biosynthesis. FAD-linked oxidoreductase; part of the gene cluster that mediates the biosynthesis of hypothemycin, a resorcylic acid lactone (RAL) that irreversibly inhibits a subset of protein kinases with a conserved cysteine in the ATP binding site such as human ERK2. The first step is performed by both PKSs hmp3 and hmp8 and leads to the production of 7',8'-dehydrozearalenol (DHZ). The highly reducing PKS hpm8 synthesizes the reduced hexaketide (7S,11S,2E,8E)-7,11-dihydroxy-dodeca-2,8-dienoate, which is transferred downstream to the non-reducing PKS hpm3. Hpm3 then extends the reduced hexaketide to a nonaketide, after which regioselective cyclization and macrolactonization affords DHZ. The next step is the conversion of DHZ into aigialomycin C and is performed by the O-methyltransferase hmp5, the FAD-binding monooxygenase hmp7, and the cytochrome P450 monooxygenase hmp1. The wide substrate tolerance of the hmp5 and hmp7 implies that the reactions from DHZ to aigialomycin C can occur in any order. The steps from aigialomycin C to hypothemycin are less well established. The FAD-linked oxidoreductase hmp9 presumably catalyzes oxidation of the C-6' hydroxyl to a ketone. The timing of this oxidation is important, since the resulting enone functional group is a Michael acceptor that can react spontaneously with glutathione, an abundant metabolite in fungal cells. The glutathione S-transferase hmp2 catalyzes cis-trans isomerization of the 7',8' double bond with equilibrium favoring the trans isomer. The hpm6-encoded transporter might preferentially pump hypothemycin out of the cell relative to the trans isomer aigialomycin A. The cis-to-trans isomerization may be coupled with C-4' hydroxylation, since all known hypothemycin analogs containing the enone functional group also have hydroxyl groups at both C-4' and C-5'. This Hypomyces subiculosus (Nectria subiculosa) protein is FAD-linked oxidoreductase hmp9.